Consider the following 231-residue polypeptide: Hypoxanthine-guanine-xanthine phosphoribosyltransferase (231 aa).

GMP-binding positions include K77, E144–T152, K176, and D204. D148 (proton acceptor) is an active-site residue. D204 contacts Mg(2+).

It belongs to the purine/pyrimidine phosphoribosyltransferase family. Homotetramer. It depends on Mg(2+) as a cofactor.

The protein resides in the cytoplasm. The enzyme catalyses IMP + diphosphate = hypoxanthine + 5-phospho-alpha-D-ribose 1-diphosphate. It catalyses the reaction GMP + diphosphate = guanine + 5-phospho-alpha-D-ribose 1-diphosphate. It carries out the reaction XMP + diphosphate = xanthine + 5-phospho-alpha-D-ribose 1-diphosphate. It participates in purine metabolism; GMP biosynthesis via salvage pathway; GMP from guanine: step 1/1. It functions in the pathway purine metabolism; IMP biosynthesis via salvage pathway; IMP from hypoxanthine: step 1/1. Its pathway is purine metabolism; XMP biosynthesis via salvage pathway; XMP from xanthine: step 1/1. In terms of biological role, catalyzes the transfer of a ribosyl phosphate group from 5-phosphoribose 1-diphosphate to the N(9) of hypoxanthine, guanine or xanthine, leading to IMP, GMP and XMP, respectively. Plays a central role in the generation of purine nucleotides through the purine salvage pathway. The polypeptide is Hypoxanthine-guanine-xanthine phosphoribosyltransferase (LACZ) (Plasmodium falciparum (isolate K1 / Thailand)).